Here is a 324-residue protein sequence, read N- to C-terminus: tRNA U34 carboxymethyltransferase (324 aa).

Carboxy-S-adenosyl-L-methionine-binding positions include K92, W106, K111, G131, 153–155 (DPT), 182–183 (IE), M197, Y201, and R316.

The protein belongs to the class I-like SAM-binding methyltransferase superfamily. CmoB family. In terms of assembly, homotetramer.

The enzyme catalyses carboxy-S-adenosyl-L-methionine + 5-hydroxyuridine(34) in tRNA = 5-carboxymethoxyuridine(34) in tRNA + S-adenosyl-L-homocysteine + H(+). Its function is as follows. Catalyzes carboxymethyl transfer from carboxy-S-adenosyl-L-methionine (Cx-SAM) to 5-hydroxyuridine (ho5U) to form 5-carboxymethoxyuridine (cmo5U) at position 34 in tRNAs. The protein is tRNA U34 carboxymethyltransferase of Proteus mirabilis (strain HI4320).